Reading from the N-terminus, the 716-residue chain is Antibacterial effector protein Tle3 (716 aa).

The interval 68–87 (PTLPGGQANPGYLTPAGYSL) is disordered.

As to quaternary structure, interacts in the cytoplasm with the adapter protein Tla3. Interacts in the periplasm with the immunity protein Tli3.

The protein localises to the secreted. Its subcellular location is the host periplasm. Its activity is regulated as follows. Neutralized by the immunity protein Tli3 in the periplasm of P.aeruginosa cells. Its function is as follows. Antibacterial effector. Is toxic once delivered in the periplasm of prey bacteria. The polypeptide is Antibacterial effector protein Tle3 (Pseudomonas aeruginosa (strain ATCC 15692 / DSM 22644 / CIP 104116 / JCM 14847 / LMG 12228 / 1C / PRS 101 / PAO1)).